A 192-amino-acid polypeptide reads, in one-letter code: MPKDKLVITVSGLAGSGTTTLSKKIAEHYGLKHVYAGLIFRQMAKEKGMSLEEFQKYAELHPEIDREVDRRQIEAAKEGNVVIEGRLAGWMVKNADLKIWLDAPIRVRAERVAKREGISVEEAFMKIAEREMQNRKRYLNLYGIDINDLSIYDLIINTSKWSPEGVFAIVKAAIDHLDPVGDAGSKKEKEVG.

12–20 (GLAGSGTTT) is an ATP binding site.

Belongs to the cytidylate kinase family. Type 2 subfamily.

It is found in the cytoplasm. The catalysed reaction is CMP + ATP = CDP + ADP. It carries out the reaction dCMP + ATP = dCDP + ADP. In Pyrococcus horikoshii (strain ATCC 700860 / DSM 12428 / JCM 9974 / NBRC 100139 / OT-3), this protein is Cytidylate kinase (cmk).